The sequence spans 530 residues: UDP-glucuronosyltransferase 1A10 (530 aa).

An N-terminal signal peptide occupies residues 1–25; sequence MARAGWTSPVPLCVCLLLTCGFAEA. Asn-71, Asn-292, and Asn-344 each carry an N-linked (GlcNAc...) asparagine glycan. The chain crosses the membrane as a helical span at residues 488–504; the sequence is VIGFLLAVVLTVAFITF.

It belongs to the UDP-glycosyltransferase family. Homodimer. Homooligomer. Interacts with UGT1A1, UGT1A3, UGT1A4, UGT1A6, UGT1A7, UGT1A8 and UGT1A9 to form heterodimers. Isoform 1 interacts with isoform 2/i2 suggesting that oligomerization is involved in negative regulation of transferase activity by isoform 2. Isoform 1 also interacts with respective i2 isoforms of UGT1A1, UGT1A3, UGT1A4, UGT1A6, UGT1A7, UGT1A8 and UGT1A9. As to expression, liver and colon. Isoform 1 and isoform 2 are expressed in colon, esophagus and small intestine; isoform 2 but not isoform 1 is expressed in liver or kidney.

The protein resides in the endoplasmic reticulum membrane. The enzyme catalyses glucuronate acceptor + UDP-alpha-D-glucuronate = acceptor beta-D-glucuronoside + UDP + H(+). It catalyses the reaction 17beta-estradiol + UDP-alpha-D-glucuronate = 17beta-estradiol 3-O-(beta-D-glucuronate) + UDP + H(+). It carries out the reaction 17beta-estradiol + UDP-alpha-D-glucuronate = 17beta-estradiol 17-O-(beta-D-glucuronate) + UDP + H(+). The catalysed reaction is 17alpha-estradiol + UDP-alpha-D-glucuronate = 17alpha-estradiol 3-O-(beta-D-glucuronate) + UDP + H(+). The enzyme catalyses 16alpha,17beta-estriol + UDP-alpha-D-glucuronate = 16alpha,17beta-estriol 3-O-(beta-D-glucuronate) + UDP + H(+). It catalyses the reaction 16beta,17beta-estriol + UDP-alpha-D-glucuronate = 16beta,17beta-estriol 3-O-(beta-D-glucuronate) + UDP + H(+). It carries out the reaction 16alpha,17alpha-estriol + UDP-alpha-D-glucuronate = 16alpha,17alpha-estriol 3-O-(beta-D-glucuronate) + UDP + H(+). The catalysed reaction is 16alpha-hydroxyestrone + UDP-alpha-D-glucuronate = 16alpha-hydroxyestrone 3-O-(beta-D-glucuronate) + UDP + H(+). The enzyme catalyses estrone + UDP-alpha-D-glucuronate = estrone 3-O-(beta-D-glucuronate) + UDP + H(+). It catalyses the reaction prunetin + UDP-alpha-D-glucuronate = prunetin-4'-O-beta-D-glucuronide + UDP. It carries out the reaction (5Z,8Z,11Z,14Z)-eicosatetraenoate + UDP-alpha-D-glucuronate = O-[(5Z),(8Z),(11Z),(14Z)-eicosatetraenoyl]-beta-D-glucuronate + UDP. The catalysed reaction is 15-hydroxy-(5Z,8Z,11Z,13E)-eicosatetraenoate + UDP-alpha-D-glucuronate = 15-O-(beta-D-glucuronosyl)-(5Z,8Z,11Z,14Z)-eicosatetraenoate + UDP + H(+). The enzyme catalyses prostaglandin B1 + UDP-alpha-D-glucuronate = 15-O-(beta-D-glucuronosyl)-prostaglandin B1 + UDP + H(+). It catalyses the reaction (E)-ferulate + UDP-alpha-D-glucuronate = (E)-4-O-(beta-D-glucuronosyl)-ferulate + UDP + H(+). It carries out the reaction (E)-ferulate + UDP-alpha-D-glucuronate = (E)-ferulic acid beta-D-glucuronate ester + UDP. The catalysed reaction is losartan + UDP-alpha-D-glucuronate = losartan-2-N-beta-D-glucuronide + UDP. The enzyme catalyses candesartan + UDP-alpha-D-glucuronate = candesartan O-beta-D-glucuronoside + UDP. It catalyses the reaction candesartan + UDP-alpha-D-glucuronate = candesartan-2-N-beta-D-glucuronide + UDP. It carries out the reaction zolasartan + UDP-alpha-D-glucuronate = zolarsartan-1-N-beta-D-glucuronide + UDP. In terms of biological role, UDP-glucuronosyltransferase (UGT) that catalyzes phase II biotransformation reactions in which lipophilic substrates are conjugated with glucuronic acid to increase the metabolite's water solubility, thereby facilitating excretion into either the urine or bile. Essential for the elimination and detoxification of drugs, xenobiotics and endogenous compounds. Catalyzes the glucuronidation of endogenous estrogen hormones such as estradiol, estrone and estriol. Involved in the glucuronidation of arachidonic acid (AA) and AA-derived eicosanoids including 15-HETE and PGB1. Involved in the glucuronidation of the phytochemical ferulic acid at the phenolic or the carboxylic acid group. Also catalyzes the glucuronidation of the isoflavones genistein, daidzein, glycitein, formononetin, biochanin A and prunetin, which are phytoestrogens with anticancer and cardiovascular properties. Involved in the glucuronidation of the AGTR1 angiotensin receptor antagonist losartan, caderastan and zolarsatan, drugs which can inhibit the effect of angiotensin II. Its function is as follows. Lacks UGT glucuronidation activity but acts as a negative regulator of isoform 1. In Homo sapiens (Human), this protein is UDP-glucuronosyltransferase 1A10.